The primary structure comprises 434 residues: MGIKNLKSLLLENKSLTILDDNLYKVYNGIFVDTMSIYIAVANCVRNLEELTTVFIKYVNGWVKKGGHVTLFIDRGSIKIKQDVRDKRRKYSKLTKDRKMLELEKCTSEIQNVTGFMEEEIKAEMQLKIDKLTFQIYLSDYDNIKISLNEILTHFNNNENVTLFYCDERDAEFVMCLEAKTQFSTTGEWPLIISTDQDTMLFASADNHPKMIKNLTQLFKFVPSAEDNYLAKLTALVNGCDFFPGLYGASITPNNLNKIQLFSDFTIDNIVTSLAIKNYYRKTNSTVDVRNIVTFINDYANLDDVYSYIPPCQCTVQEFIFSALDEKWNEFKSSYLESVPLPCQLMYALEPRKEIDVSEVKTLSSYIDFENTKSDIDVIKSISSIFGYSNENCNTIVFGIYKDNLLLSINNSFYFNDSLLITNTKSDNIINIGY.

It belongs to the XPG/RAD2 endonuclease family. FEN1 subfamily. Requires Mg(2+) as cofactor.

Its subcellular location is the virion. Functionally, putative nuclease that seems to be required for double-strand break repair, homologous recombination, and production of full-length viral genomic DNA. This is Putative nuclease OPG089 (OPG089) from Monkeypox virus.